The primary structure comprises 730 residues: Nitrogen regulatory protein GLN3 (730 aa).

The tract at residues 1–45 (MQDDPENSKLYDLLNSHLDVHGRSNEEPRQTGDSRSQSSGNTGEN) is disordered. Positions 18–32 (LDVHGRSNEEPRQTG) are enriched in basic and acidic residues. A compositionally biased stretch (polar residues) spans 33–43 (DSRSQSSGNTG). The 9aaTAD motif lies at 129–137 (GEIAQLWDF). Disordered stretches follow at residues 187-208 (SSTS…TNAQ) and 224-262 (SSSA…TTNS). Residues 224–240 (SSSAMNITNNNNSNNSN) show a composition bias toward low complexity. Phosphoserine is present on serine 251. Residues 252-262 (IGLSSSNTTNS) show a composition bias toward polar residues. Phosphoserine is present on residues serine 267 and serine 285. The GATA-type zinc finger occupies 306 to 330 (CFNCKTFKTPLWRRSPEGNTLCNAC). 2 disordered regions span residues 355-398 (SKKR…SLQQ) and 449-516 (ANFN…NSQQ). Low complexity-rich tracts occupy residues 370–384 (TPSA…VTTT), 449–470 (ANFN…HNSN), and 482–499 (RSST…SSRS). Serine 469 carries the post-translational modification Phosphoserine. Residues serine 552 and serine 562 each carry the phosphoserine modification. 2 disordered regions span residues 593–673 (LHEQ…SNSF) and 696–717 (DVSA…KESS). Low complexity-rich tracts occupy residues 596–631 (QQQV…NFVS), 641–651 (TPVDSPSVSRP), and 658–672 (TSLL…ESNS).

Its subcellular location is the nucleus. Functionally, positive nitrogen regulatory protein. Required for the activation of transcription of a number of genes (including the allantoin pathway genes) in response to the replacement of glutamine by glutamate as source of nitrogen. Binds the nitrogen upstream activation sequence of GLN1, the gene encoding glutamine synthetase. URE2 may catalytically inactivate GLN3 in response to an increase in the intracellular concentration of glutamine. The sequence is that of Nitrogen regulatory protein GLN3 (GLN3) from Saccharomyces cerevisiae (strain ATCC 204508 / S288c) (Baker's yeast).